The sequence spans 187 residues: Elongation factor P (187 aa).

Belongs to the elongation factor P family.

Its subcellular location is the cytoplasm. The protein operates within protein biosynthesis; polypeptide chain elongation. Involved in peptide bond synthesis. Stimulates efficient translation and peptide-bond synthesis on native or reconstituted 70S ribosomes in vitro. Probably functions indirectly by altering the affinity of the ribosome for aminoacyl-tRNA, thus increasing their reactivity as acceptors for peptidyl transferase. The sequence is that of Elongation factor P from Mycobacterium avium (strain 104).